Reading from the N-terminus, the 788-residue chain is DNA ligase (788 aa).

NAD(+) contacts are provided by residues 35 to 39, 84 to 85, and Glu-124; these read DAEYD and SL. The active-site N6-AMP-lysine intermediate is Lys-126. The NAD(+) site is built by Arg-147, Glu-184, Lys-300, and Lys-324. Residues Cys-418, Cys-421, Cys-448, and Cys-454 each contribute to the Zn(2+) site. Residues 707–788 form the BRCT domain; it reads AEGLPLAGQT…FIERLAQLGS (82 aa).

It belongs to the NAD-dependent DNA ligase family. LigA subfamily. Requires Mg(2+) as cofactor. Mn(2+) is required as a cofactor.

It catalyses the reaction NAD(+) + (deoxyribonucleotide)n-3'-hydroxyl + 5'-phospho-(deoxyribonucleotide)m = (deoxyribonucleotide)n+m + AMP + beta-nicotinamide D-nucleotide.. DNA ligase that catalyzes the formation of phosphodiester linkages between 5'-phosphoryl and 3'-hydroxyl groups in double-stranded DNA using NAD as a coenzyme and as the energy source for the reaction. It is essential for DNA replication and repair of damaged DNA. This is DNA ligase from Stutzerimonas stutzeri (strain A1501) (Pseudomonas stutzeri).